The sequence spans 338 residues: Putative transport protein TM_1349 (338 aa).

7 helical membrane passes run 20 to 40 (ILIS…IVLM), 68 to 88 (ALLL…PPVF), 147 to 167 (VSVT…VFYI), 203 to 223 (VIFI…EAFN), 239 to 259 (FIPI…SLTL), 263 to 283 (GVLL…VVFI), and 297 to 317 (IILS…FVGV).

It belongs to the autoinducer-2 exporter (AI-2E) (TC 2.A.86) family.

The protein localises to the cell membrane. This Thermotoga maritima (strain ATCC 43589 / DSM 3109 / JCM 10099 / NBRC 100826 / MSB8) protein is Putative transport protein TM_1349.